The chain runs to 588 residues: UDP-N-acetylmuramate--L-alanine ligase (588 aa).

119–125 (GSHGKST) lines the ATP pocket. Over residues 344–371 (VPAAAGAAAAPPVRRDPATAAAAATTAP) the composition is skewed to low complexity. A disordered region spans residues 344-411 (VPAAAGAAAA…APAAGPDHAA (68 aa)). The segment covering 372 to 381 (IGPPDSPPPT) has biased composition (pro residues). Residues 382 to 411 (GIALPRAAPPAVDAPVAATPAPAAGPDHAA) show a composition bias toward low complexity.

It belongs to the MurCDEF family.

It localises to the cytoplasm. The catalysed reaction is UDP-N-acetyl-alpha-D-muramate + L-alanine + ATP = UDP-N-acetyl-alpha-D-muramoyl-L-alanine + ADP + phosphate + H(+). It participates in cell wall biogenesis; peptidoglycan biosynthesis. Cell wall formation. This is UDP-N-acetylmuramate--L-alanine ligase from Frankia alni (strain DSM 45986 / CECT 9034 / ACN14a).